The sequence spans 98 residues: Protein translation factor SUI1 homolog (98 aa).

This sequence belongs to the SUI1 family.

This chain is Protein translation factor SUI1 homolog, found in Thermococcus onnurineus (strain NA1).